The following is a 341-amino-acid chain: L-threonine 3-dehydrogenase (341 aa).

Cys38 lines the Zn(2+) pocket. Residues Thr40 and His43 each act as charge relay system in the active site. Positions 63, 64, 93, 96, 99, and 107 each coordinate Zn(2+). Residues Ile175, Asp195, Arg200, 262–264 (LGI), and 286–287 (IY) contribute to the NAD(+) site.

The protein belongs to the zinc-containing alcohol dehydrogenase family. In terms of assembly, homotetramer. Zn(2+) is required as a cofactor.

It localises to the cytoplasm. It catalyses the reaction L-threonine + NAD(+) = (2S)-2-amino-3-oxobutanoate + NADH + H(+). The protein operates within amino-acid degradation; L-threonine degradation via oxydo-reductase pathway; glycine from L-threonine: step 1/2. In terms of biological role, catalyzes the NAD(+)-dependent oxidation of L-threonine to 2-amino-3-ketobutyrate. This is L-threonine 3-dehydrogenase from Shigella sonnei (strain Ss046).